The sequence spans 203 residues: uncharacterized protein (203 aa).

Residues 1 to 23 (MGSSFVIDRSSSSPAPPRGPAPK) are disordered.

This is an uncharacterized protein from Saccharomyces cerevisiae (strain ATCC 204508 / S288c) (Baker's yeast).